The sequence spans 500 residues: NAD(P)H-quinone oxidoreductase chain 4, chloroplastic (500 aa).

The next 14 helical transmembrane spans lie at phenylalanine 4–leucine 24, leucine 37–leucine 57, glycine 84–alanine 104, serine 111–phenylalanine 129, leucine 134–methionine 154, phenylalanine 167–leucine 187, alanine 208–isoleucine 228, histidine 242–valine 262, alanine 272–alanine 292, isoleucine 305–aspartate 325, glycine 330–glycine 350, leucine 386–threonine 406, isoleucine 416–methionine 436, and phenylalanine 462–valine 482.

Belongs to the complex I subunit 4 family.

It is found in the plastid. Its subcellular location is the chloroplast thylakoid membrane. The catalysed reaction is a plastoquinone + NADH + (n+1) H(+)(in) = a plastoquinol + NAD(+) + n H(+)(out). It carries out the reaction a plastoquinone + NADPH + (n+1) H(+)(in) = a plastoquinol + NADP(+) + n H(+)(out). The chain is NAD(P)H-quinone oxidoreductase chain 4, chloroplastic from Morus indica (Mulberry).